We begin with the raw amino-acid sequence, 497 residues long: Cytochrome P450 71A12 (497 aa).

The helical transmembrane segment at 4–24 threads the bilayer; sequence ILMVSLCLTTLITLFLLKQFL. Residue cysteine 439 participates in heme binding.

Belongs to the cytochrome P450 family. Requires heme as cofactor.

It is found in the membrane. In terms of biological role, converts indole-3-acetaldoxime to indole cyanohydrin. Involved in the biosynthetic pathway to 4-hydroxyindole-3-carbonyl nitrile (4-OH-ICN), a cyanogenic metabolite required for inducible pathogen defense. The protein is Cytochrome P450 71A12 (CYP71A12) of Arabidopsis thaliana (Mouse-ear cress).